The primary structure comprises 319 residues: Acetyl-coenzyme A carboxylase carboxyl transferase subunit alpha (319 aa).

In terms of domain architecture, CoA carboxyltransferase C-terminal spans 32 to 293 (NVDAEVRALR…KAVLLNELDA (262 aa)).

Belongs to the AccA family. Acetyl-CoA carboxylase is a heterohexamer composed of biotin carboxyl carrier protein (AccB), biotin carboxylase (AccC) and two subunits each of ACCase subunit alpha (AccA) and ACCase subunit beta (AccD).

Its subcellular location is the cytoplasm. It catalyses the reaction N(6)-carboxybiotinyl-L-lysyl-[protein] + acetyl-CoA = N(6)-biotinyl-L-lysyl-[protein] + malonyl-CoA. Its pathway is lipid metabolism; malonyl-CoA biosynthesis; malonyl-CoA from acetyl-CoA: step 1/1. Component of the acetyl coenzyme A carboxylase (ACC) complex. First, biotin carboxylase catalyzes the carboxylation of biotin on its carrier protein (BCCP) and then the CO(2) group is transferred by the carboxyltransferase to acetyl-CoA to form malonyl-CoA. The chain is Acetyl-coenzyme A carboxylase carboxyl transferase subunit alpha from Xanthomonas campestris pv. campestris (strain B100).